The following is a 527-amino-acid chain: Bifunctional purine biosynthesis protein PurH (527 aa).

The MGS-like domain occupies 9-156 (MARKPIRRAL…KNHPSVAVVT (148 aa)).

Belongs to the PurH family.

The enzyme catalyses (6R)-10-formyltetrahydrofolate + 5-amino-1-(5-phospho-beta-D-ribosyl)imidazole-4-carboxamide = 5-formamido-1-(5-phospho-D-ribosyl)imidazole-4-carboxamide + (6S)-5,6,7,8-tetrahydrofolate. It carries out the reaction IMP + H2O = 5-formamido-1-(5-phospho-D-ribosyl)imidazole-4-carboxamide. It functions in the pathway purine metabolism; IMP biosynthesis via de novo pathway; 5-formamido-1-(5-phospho-D-ribosyl)imidazole-4-carboxamide from 5-amino-1-(5-phospho-D-ribosyl)imidazole-4-carboxamide (10-formyl THF route): step 1/1. Its pathway is purine metabolism; IMP biosynthesis via de novo pathway; IMP from 5-formamido-1-(5-phospho-D-ribosyl)imidazole-4-carboxamide: step 1/1. This Mycobacterium leprae (strain Br4923) protein is Bifunctional purine biosynthesis protein PurH.